The chain runs to 173 residues: Mesencephalic astrocyte-derived neurotrophic factor homolog (173 aa).

The signal sequence occupies residues 1 to 22 (MKTWYMVVVIGFLATLVQTSLA). Disulfide bonds link Cys28–Cys114, Cys31–Cys103, Cys61–Cys72, and Cys148–Cys151.

This sequence belongs to the ARMET family.

It localises to the secreted. Required during the maturation of the embryonic nervous system for maintenance of neuronal and cuticular connectivity. Essential for maintenance of dopaminergic neurons and dopamine levels. This chain is Mesencephalic astrocyte-derived neurotrophic factor homolog, found in Drosophila yakuba (Fruit fly).